The chain runs to 436 residues: tRNA-2-methylthio-N(6)-dimethylallyladenosine synthase (436 aa).

One can recognise an MTTase N-terminal domain in the interval 1-115 (MRVFFKTYGC…IAEVLQKAAR (115 aa)). The [4Fe-4S] cluster site is built by Cys10, Cys46, Cys80, Cys151, Cys155, and Cys158. The Radical SAM core domain occupies 137 to 368 (RFSKHHAWIT…LELQKQINRE (232 aa)). The TRAM domain maps to 371 to 432 (MQYLGKVVEI…AGPLYGKLQK (62 aa)).

The protein belongs to the methylthiotransferase family. MiaB subfamily. Monomer. It depends on [4Fe-4S] cluster as a cofactor.

It is found in the cytoplasm. The enzyme catalyses N(6)-dimethylallyladenosine(37) in tRNA + (sulfur carrier)-SH + AH2 + 2 S-adenosyl-L-methionine = 2-methylsulfanyl-N(6)-dimethylallyladenosine(37) in tRNA + (sulfur carrier)-H + 5'-deoxyadenosine + L-methionine + A + S-adenosyl-L-homocysteine + 2 H(+). In terms of biological role, catalyzes the methylthiolation of N6-(dimethylallyl)adenosine (i(6)A), leading to the formation of 2-methylthio-N6-(dimethylallyl)adenosine (ms(2)i(6)A) at position 37 in tRNAs that read codons beginning with uridine. The sequence is that of tRNA-2-methylthio-N(6)-dimethylallyladenosine synthase from Pseudothermotoga lettingae (strain ATCC BAA-301 / DSM 14385 / NBRC 107922 / TMO) (Thermotoga lettingae).